The primary structure comprises 76 residues: Protein MATERNALLY EXPRESSED GENE 4 (76 aa).

The N-terminal stretch at 1-27 (MEYRKRVDALVFFSLLLLGYFAAHAHG) is a signal peptide. Residues Cys53 and Cys75 are joined by a disulfide bond.

This sequence belongs to the MEG family. In terms of tissue distribution, expressed exclusively in endosperm.

This chain is Protein MATERNALLY EXPRESSED GENE 4 (MEG4), found in Zea mays (Maize).